An 833-amino-acid chain; its full sequence is Serine/threonine-protein phosphatase 4 regulatory subunit 3A (833 aa).

The region spanning 1–100 (MTDTRRRVKV…DEIWEKICQV (100 aa)) is the WH1 domain. A phosphoserine mark is found at serine 117 and serine 127. Lysine 655 carries the post-translational modification N6-acetyllysine. Residues 683-694 (FNTDEDDMEDGE) show a composition bias toward acidic residues. Disordered stretches follow at residues 683–712 (FNTD…IMDP) and 733–833 (KTNL…KFDS). A phosphoserine mark is found at serine 698, serine 741, serine 768, serine 771, serine 774, serine 777, and serine 780. The span at 734–751 (TNLSGRQSPSFKLSLSSG) shows a compositional bias: polar residues. The span at 752–768 (TKTNLTSQSSTTNLPGS) shows a compositional bias: low complexity. Residues 785–794 (PKNTSQTAAI) are compositionally biased toward polar residues. Over residues 806-820 (YPDDDEDDDEDEDKE) the composition is skewed to acidic residues.

Belongs to the SMEK family. As to quaternary structure, serine/threonine-protein phosphatase 4 (PP4) occurs in different assemblies of the catalytic and one or more regulatory subunits. Component of the PP4 complex PPP4C-PPP4R2-PPP4R3A. Interacts with PPP4C; the interaction requires PPP4R2.

The protein localises to the cytoplasm. Its subcellular location is the cytoskeleton. It localises to the microtubule organizing center. It is found in the centrosome. The protein resides in the nucleus. Its function is as follows. Regulatory subunit of serine/threonine-protein phosphatase 4. May regulate the activity of PPP4C at centrosomal microtubule organizing centers. The PPP4C-PPP4R2-PPP4R3A PP4 complex specifically dephosphorylates H2AX phosphorylated on 'Ser-140' (gamma-H2AX) generated during DNA replication and required for DNA DSB repair. In Homo sapiens (Human), this protein is Serine/threonine-protein phosphatase 4 regulatory subunit 3A.